Reading from the N-terminus, the 205-residue chain is Glycerol-3-phosphate acyltransferase (205 aa).

Helical transmembrane passes span 6-26, 55-75, 89-109, 120-140, and 162-182; these read STVL…AVVV, KAAI…VWLV, VALV…FRFV, ILLA…LVIA, and ALMF…VLLI.

The protein belongs to the PlsY family. As to quaternary structure, probably interacts with PlsX.

Its subcellular location is the cell inner membrane. It catalyses the reaction an acyl phosphate + sn-glycerol 3-phosphate = a 1-acyl-sn-glycero-3-phosphate + phosphate. Its pathway is lipid metabolism; phospholipid metabolism. In terms of biological role, catalyzes the transfer of an acyl group from acyl-phosphate (acyl-PO(4)) to glycerol-3-phosphate (G3P) to form lysophosphatidic acid (LPA). This enzyme utilizes acyl-phosphate as fatty acyl donor, but not acyl-CoA or acyl-ACP. The polypeptide is Glycerol-3-phosphate acyltransferase (Herminiimonas arsenicoxydans).